Consider the following 157-residue polypeptide: Universal stress protein Sll1654 (157 aa).

Belongs to the universal stress protein A family.

The chain is Universal stress protein Sll1654 from Synechocystis sp. (strain ATCC 27184 / PCC 6803 / Kazusa).